The following is a 397-amino-acid chain: Putative gustatory receptor 93c (397 aa).

Over Met1 to Ala12 the chain is Cytoplasmic. A helical membrane pass occupies residues Leu13–Phe33. At Asp34 to Gln87 the chain is on the extracellular side. The helical transmembrane segment at Cys88–Tyr108 threads the bilayer. At Glu109–Arg141 the chain is on the cytoplasmic side. Residues Glu142–Cys162 form a helical membrane-spanning segment. Topologically, residues Gln163–Glu179 are extracellular. The chain crosses the membrane as a helical span at residues Ile180 to Val200. Residues Ala201 to Pro266 are Cytoplasmic-facing. A helical transmembrane segment spans residues Val267 to Ile287. The Extracellular portion of the chain corresponds to Arg288–Lys295. The helical transmembrane segment at Ile296–Val316 threads the bilayer. Topologically, residues His317–Glu371 are cytoplasmic. Residues Val372–Ile392 form a helical membrane-spanning segment. The Extracellular segment spans residues Gln393–Leu397.

This sequence belongs to the insect chemoreceptor superfamily. Gustatory receptor (GR) family. Gr93a subfamily. In larvae, is expressed in neurons of the posterior pharyngeal sense organ.

It localises to the cell membrane. Its function is as follows. Probable gustatory receptor which mediates acceptance or avoidance behavior, depending on its substrates. In Drosophila melanogaster (Fruit fly), this protein is Putative gustatory receptor 93c (Gr93c).